The sequence spans 706 residues: Protein-glutamine gamma-glutamyltransferase 6 (706 aa).

Positions 223, 226, and 228 each coordinate Ca(2+). Residue cysteine 274 is part of the active site. Ca(2+) is bound by residues aspartate 303, aspartate 305, asparagine 307, serine 309, and aspartate 327. Residues histidine 333 and aspartate 356 contribute to the active site. Positions 396, 417, 445, and 450 each coordinate Ca(2+).

This sequence belongs to the transglutaminase superfamily. Transglutaminase family. Requires Ca(2+) as cofactor.

The protein localises to the cytoplasm. It catalyses the reaction L-glutaminyl-[protein] + L-lysyl-[protein] = [protein]-L-lysyl-N(6)-5-L-glutamyl-[protein] + NH4(+). Its function is as follows. Catalyzes the cross-linking of proteins and the conjugation of polyamines to proteins. This Homo sapiens (Human) protein is Protein-glutamine gamma-glutamyltransferase 6 (TGM6).